The following is a 345-amino-acid chain: D-alanine--D-alanine ligase (345 aa).

The ATP-grasp domain maps to 137–342 (KAAFSAAGLP…LEELVHQLLE (206 aa)). 169 to 224 (ETQLGYPCFIKPANLGSSVGISKATNRSELQAGLDLAASHDSRLLVEKGLQVRELE) is a binding site for ATP. Mg(2+)-binding residues include Asp-295, Glu-309, and Asn-311.

The protein belongs to the D-alanine--D-alanine ligase family. Requires Mg(2+) as cofactor. Mn(2+) serves as cofactor.

It is found in the cytoplasm. The catalysed reaction is 2 D-alanine + ATP = D-alanyl-D-alanine + ADP + phosphate + H(+). The protein operates within cell wall biogenesis; peptidoglycan biosynthesis. Its function is as follows. Cell wall formation. This Synechococcus sp. (strain RCC307) protein is D-alanine--D-alanine ligase.